The chain runs to 71 residues: Protein MMP24OS (71 aa).

Positions 1 to 10 are enriched in gly residues; the sequence is MGAQLSGGRG. The segment at 1–61 is disordered; the sequence is MGAQLSGGRG…PSPWGPLDDV (61 aa). Pro residues predominate over residues 36–55; the sequence is HPPQPQPQPQPQPQPEPSPW.

The sequence is that of Protein MMP24OS from Homo sapiens (Human).